Reading from the N-terminus, the 880-residue chain is Leucine--tRNA ligase (880 aa).

The 'HIGH' region signature appears at 46–56; the sequence is PYPSGALHMGH. The 'KMSKS' region signature appears at 638-642; the sequence is KMSKS. Residue K641 coordinates ATP.

Belongs to the class-I aminoacyl-tRNA synthetase family.

The protein resides in the cytoplasm. It carries out the reaction tRNA(Leu) + L-leucine + ATP = L-leucyl-tRNA(Leu) + AMP + diphosphate. In Xanthomonas oryzae pv. oryzae (strain MAFF 311018), this protein is Leucine--tRNA ligase.